Here is a 608-residue protein sequence, read N- to C-terminus: Dolichyl-diphosphooligosaccharide--protein glycosyltransferase subunit 1 (608 aa).

A signal peptide spans 1 to 25 (MESPVALLLLLLLCLGALAPTPGSA). At 26-440 (SSEAPPLVNE…FNKVLMLQEP (415 aa)) the chain is on the lumenal side. Position 188 is an N6-acetyllysine (lysine 188). N-linked (GlcNAc...) asparagine glycosylation is present at asparagine 300. A helical membrane pass occupies residues 441-458 (LLVVAAFYILFFTVIIYV). Residues 459-608 (RLDFSITKDP…TKIDHILDAL (150 aa)) lie on the Cytoplasmic side of the membrane. Lysine 539 carries the N6-acetyllysine; alternate modification. Residue lysine 539 forms a Glycyl lysine isopeptide (Lys-Gly) (interchain with G-Cter in SUMO2); alternate linkage.

This sequence belongs to the OST1 family. Component of the oligosaccharyltransferase (OST) complex. OST exists in two different complex forms which contain common core subunits RPN1, RPN2, OST48, OST4, DAD1 and TMEM258, either STT3A or STT3B as catalytic subunits, and form-specific accessory subunits. STT3A complex assembly occurs through the formation of 3 subcomplexes. Subcomplex 1 contains RPN1 and TMEM258, subcomplex 2 contains the STT3A-specific subunits STT3A, DC2/OSTC, and KCP2 as well as the core subunit OST4, and subcomplex 3 contains RPN2, DAD1, and OST48. The STT3A complex can form stable complexes with the Sec61 complex or with both the Sec61 and TRAP complexes. Interacts with TMEM35A/NACHO. Ubiquitinated by the ECS(ASB11) complex. Ubiquitinated by RNF128, leading to degradation in a proteasome/lysosome-dependent manner. In terms of processing, ufmylated by UFL1 in response to endoplasmic reticulum stress, promoting reticulophagy of endoplasmic reticulum sheets.

It is found in the endoplasmic reticulum membrane. It functions in the pathway protein modification; protein glycosylation. Functionally, subunit of the oligosaccharyl transferase (OST) complex that catalyzes the initial transfer of a defined glycan (Glc(3)Man(9)GlcNAc(2) in eukaryotes) from the lipid carrier dolichol-pyrophosphate to an asparagine residue within an Asn-X-Ser/Thr consensus motif in nascent polypeptide chains, the first step in protein N-glycosylation. N-glycosylation occurs cotranslationally and the complex associates with the Sec61 complex at the channel-forming translocon complex that mediates protein translocation across the endoplasmic reticulum (ER). All subunits are required for a maximal enzyme activity. The sequence is that of Dolichyl-diphosphooligosaccharide--protein glycosyltransferase subunit 1 from Mus musculus (Mouse).